The sequence spans 450 residues: Phosphoglucosamine mutase (450 aa).

Ser101 functions as the Phosphoserine intermediate in the catalytic mechanism. The Mg(2+) site is built by Ser101, Asp241, Asp243, and Asp245. Position 101 is a phosphoserine (Ser101).

The protein belongs to the phosphohexose mutase family. The cofactor is Mg(2+). In terms of processing, activated by phosphorylation.

It catalyses the reaction alpha-D-glucosamine 1-phosphate = D-glucosamine 6-phosphate. In terms of biological role, catalyzes the conversion of glucosamine-6-phosphate to glucosamine-1-phosphate. The sequence is that of Phosphoglucosamine mutase from Lysinibacillus sphaericus (strain C3-41).